A 465-amino-acid polypeptide reads, in one-letter code: Cysteine--tRNA ligase (465 aa).

A Zn(2+)-binding site is contributed by cysteine 29. The 'HIGH' region signature appears at 31–41 (PTVYNYIHIGN). Residues cysteine 209, histidine 234, and glutamate 238 each coordinate Zn(2+). The 'KMSKS' region signature appears at 266–270 (KMSKS). Residue lysine 269 coordinates ATP. Serine 270 bears the Phosphoserine mark.

The protein belongs to the class-I aminoacyl-tRNA synthetase family. In terms of assembly, monomer. The cofactor is Zn(2+).

Its subcellular location is the cytoplasm. The catalysed reaction is tRNA(Cys) + L-cysteine + ATP = L-cysteinyl-tRNA(Cys) + AMP + diphosphate. This chain is Cysteine--tRNA ligase, found in Anoxybacillus flavithermus (strain DSM 21510 / WK1).